A 175-amino-acid polypeptide reads, in one-letter code: Macro domain-containing protein TTE0995 (175 aa).

The Macro domain maps to 1 to 174; the sequence is MKEKIKLIKG…VYSKAYEELD (174 aa).

The protein belongs to the MacroD-type family.

This is Macro domain-containing protein TTE0995 from Caldanaerobacter subterraneus subsp. tengcongensis (strain DSM 15242 / JCM 11007 / NBRC 100824 / MB4) (Thermoanaerobacter tengcongensis).